Consider the following 295-residue polypeptide: Bifunctional protein FolD (295 aa).

NADP(+)-binding positions include 163 to 165 (GRS), Ser-188, and Ile-229.

This sequence belongs to the tetrahydrofolate dehydrogenase/cyclohydrolase family. Homodimer.

It catalyses the reaction (6R)-5,10-methylene-5,6,7,8-tetrahydrofolate + NADP(+) = (6R)-5,10-methenyltetrahydrofolate + NADPH. The enzyme catalyses (6R)-5,10-methenyltetrahydrofolate + H2O = (6R)-10-formyltetrahydrofolate + H(+). It functions in the pathway one-carbon metabolism; tetrahydrofolate interconversion. Its function is as follows. Catalyzes the oxidation of 5,10-methylenetetrahydrofolate to 5,10-methenyltetrahydrofolate and then the hydrolysis of 5,10-methenyltetrahydrofolate to 10-formyltetrahydrofolate. The sequence is that of Bifunctional protein FolD from Hyphomonas neptunium (strain ATCC 15444).